A 703-amino-acid polypeptide reads, in one-letter code: MLRGRSLSVTSLGGLPQWEVEELPVEELLLFEVAWEVTNKVGGIYTVIQTKAKTTADEWGENYFLIGPYFEHNMKTQVEQCEPVNDAVRRAVDAMNKHGCQVHFGRWLIEGSPYVVLFDIGYSAWNLDRWKGDLWEACSVGIPYHDREANDMLIFGSLTAWFLKEVTDHADGKYVVAQFHEWQAGIGLILSRARKLPIATIFTTHATLLGRYLCAANIDFYNHLDKFNIDKEAGERQIYHRYCMERASVHCAHVFTTVSEITAIEAEHMLKRKPDVVTPNGLNVKKFSAVHEFQNLHAMYKARIQDFVRGHFYGHLDFDLEKTLFLFIAGRYEFSNKGADIFLESLSRLNFLLRMHKSDITVMVFFIMPAKTNNFNVETLKGQAVRKQLWDVAHSVKEKFGKKLYDALLRGEIPDLNDILDRDDLTIMKRAIFSTQRQSLPPVTTHNMIDDSTDPILSTIRRIGLFNNRTDRVKVILHPEFLSSTSPLLPMDYEEFVRGCHLGVFPSYYEPWGYTPAECTVMGIPSVTTNLSGFGCFMQEHVADPTAYGIYIVDRRFRSPDDSCNQLTKFLYGFCKQSRRQRIIQRNRTERLSDLLDWRYLGRYYQHARHLTLSRAFPDKFHVELTSPPTTEGFKYPRPSSVPPSPSGSQASSPQSSDVEDEVEDERYDEEEEAERDRLNIKSPFSLSHVPHGKKKLHGEYKN.

Ser-8 carries the post-translational modification Phosphoserine; by PKA. Ser-11 carries the phosphoserine modification. Lys-40 is a UDP binding site. His-205 and Arg-211 together coordinate UDP-alpha-D-glucose. The alpha-D-glucose 6-phosphate site is built by His-291, Glu-292, Gln-294, His-297, and Lys-301. Arg-331 provides a ligand contact to UDP. Arg-331 is a UDP-alpha-D-glucose binding site. His-501 lines the alpha-D-glucose 6-phosphate pocket. UDP-alpha-D-glucose is bound by residues Glu-510, Trp-512, and Gly-513. Thr-515 provides a ligand contact to UDP. Arg-582 and Arg-586 together coordinate alpha-D-glucose 6-phosphate. The residue at position 627 (Ser-627) is a Phosphoserine. The interval 628–703 (PPTTEGFKYP…KKKLHGEYKN (76 aa)) is disordered. 4 positions are modified to phosphoserine; by GSK3-alpha and GSK3-beta: Ser-641, Ser-645, Ser-649, and Ser-653. The span at 647–657 (SGSQASSPQSS) shows a compositional bias: low complexity. Residue Ser-657 is modified to Phosphoserine; by CK2. The span at 658 to 674 (DVEDEVEDERYDEEEEA) shows a compositional bias: acidic residues. Ser-683 is modified (phosphoserine).

The protein belongs to the glycosyltransferase 3 family. In terms of assembly, part of the glycogen synthase (GS)-glycogenin complex, a heterooctamer composed of a tetramer of GS and 2 dimers of glycogenin, where each GS protomer binds to one glycogenin subunit (via glycogenin C-terminus); the GS tetramer may dissociate from glycogenin dimers to continue glycogen polymerization on its own. May also form a heterooctamer complex with GYG1 (via GYG1 C-terminus). In terms of processing, primed phosphorylation at Ser-657 (site 5) by CSNK2A1 and CSNK2A2 is required for inhibitory phosphorylation at Ser-641 (site 3a), Ser-645 (site 3b), Ser-649 (site 3c) and Ser-653 (site 4) by GSK3A an GSK3B. Dephosphorylation at Ser-641 and Ser-645 by PP1 activates the enzyme. Phosphorylation at Ser-8 is not required for interaction with GYG1. Interaction with GYG1 does not regulate the phosphorylation at Ser-8 and Ser-641. Specifically expressed in liver (at protein level).

It carries out the reaction [(1-&gt;4)-alpha-D-glucosyl](n) + UDP-alpha-D-glucose = [(1-&gt;4)-alpha-D-glucosyl](n+1) + UDP + H(+). It functions in the pathway glycan biosynthesis; glycogen biosynthesis. With respect to regulation, allosteric activation by glucose-6-phosphate. Phosphorylation reduces the activity towards UDP-glucose. When in the non-phosphorylated state, glycogen synthase does not require glucose-6-phosphate as an allosteric activator; when phosphorylated it does. Functionally, glycogen synthase participates in the glycogen biosynthetic process along with glycogenin and glycogen branching enzyme. Extends the primer composed of a few glucose units formed by glycogenin by adding new glucose units to it. In this context, glycogen synthase transfers the glycosyl residue from UDP-Glc to the non-reducing end of alpha-1,4-glucan. In Homo sapiens (Human), this protein is Glycogen [starch] synthase, liver.